The sequence spans 86 residues: Small ribosomal subunit protein bS16 (86 aa).

The protein belongs to the bacterial ribosomal protein bS16 family.

The sequence is that of Small ribosomal subunit protein bS16 from Xanthomonas campestris pv. campestris (strain 8004).